Reading from the N-terminus, the 367-residue chain is MSDGAVVRALVLEAPRRLVVRQYRLPRIGDDDALVRVEACGLCGTDHEQYTGELAGGFAFVPGHETVGTIAAIGPRAEQRWGVSAGDRVAVEVFQSCRQCANCRGGEYRRCVRHGLADMYGFIPVDREPGLWGGYAEYQYLAPDSMVLRVAGDLSPEVATLFNPLGAGIRWGVTIPETKPGDVVAVLGPGIRGLCAAAAAKGAGAGFVMVTGLGPRDADRLALAAQFGADLAVDVAIDDPVAALTEQTGGLADVVVDVTAKAPAAFAQAIALARPAGTVVVAGTRGVGSGAPGFSPDVVVFKELRVLGALGVDATAYRAALDLLVSGRYPFASLPRRCVRLEGAEDLLATMAGERDGVPPIHGVLTP.

Zn(2+) is bound by residues cysteine 43, histidine 64, cysteine 97, cysteine 100, cysteine 103, cysteine 111, and asparagine 163.

Belongs to the zinc-containing alcohol dehydrogenase family. It depends on Zn(2+) as a cofactor.

It catalyses the reaction a primary alcohol + NAD(+) = an aldehyde + NADH + H(+). It carries out the reaction a secondary alcohol + NAD(+) = a ketone + NADH + H(+). This is Probable alcohol dehydrogenase adh (adh) from Mycobacterium tuberculosis (strain CDC 1551 / Oshkosh).